The sequence spans 256 residues: Omega-amidase YafV (256 aa).

A CN hydrolase domain is found at 4-234 (LKITLLQQPL…ATRIDAELSM (231 aa)). Glu42 (proton acceptor) is an active-site residue. Lys107 is an active-site residue. Cys141 (nucleophile) is an active-site residue.

It belongs to the carbon-nitrogen hydrolase superfamily. NIT1/NIT2 family.

The enzyme catalyses a monoamide of a dicarboxylate + H2O = a dicarboxylate + NH4(+). Its function is as follows. Hydrolyzes alpha-ketoglutaramate (a-KGM) to alpha-ketoglutarate (alpha-KG) and ammonia (specific activity 6.65 umol/min/mg), has weak activity on L-glutamine, almost no activity on deaminated glutathione (dGSH) and none on glutathione. May function as a metabolite repair enzyme. This Escherichia coli (strain B / BL21-DE3) protein is Omega-amidase YafV (yafV).